A 657-amino-acid polypeptide reads, in one-letter code: Archaeal Lon protease (657 aa).

Residues 1–123 are Cytoplasmic-facing; the sequence is MEENIESVEE…KAEREKRDRS (123 aa). An ATP-binding site is contributed by 57 to 64; the sequence is GEPGTGKS. A helical membrane pass occupies residues 124 to 144; that stretch reads RSIMFVIFSVVLLGIIAAIVL. Arg145 is a topological domain (extracellular). A helical membrane pass occupies residues 146–166; sequence SITLIFFAIMAAAFLYMAMAF. Residues 167–657 lie on the Cytoplasmic side of the membrane; the sequence is NPVIRNERAM…ATTRAGNNAA (491 aa). Positions 433–618 constitute a Lon proteolytic domain; that stretch reads GSVVGMVNGL…EDVLRVALVN (186 aa). Catalysis depends on residues Ser525 and Lys568.

The protein belongs to the peptidase S16 family. Archaeal LonB subfamily. In terms of assembly, homohexamer. Organized in a ring with a central cavity.

The protein resides in the cell membrane. Functionally, ATP-dependent serine protease that mediates the selective degradation of mutant and abnormal proteins as well as certain short-lived regulatory proteins. Degrades polypeptides processively. This chain is Archaeal Lon protease, found in Thermoplasma acidophilum (strain ATCC 25905 / DSM 1728 / JCM 9062 / NBRC 15155 / AMRC-C165).